A 128-amino-acid polypeptide reads, in one-letter code: Probable 4-amino-4-deoxy-L-arabinose-phosphoundecaprenol flippase subunit ArnF (128 aa).

The Cytoplasmic portion of the chain corresponds to 1-2 (MG). Residues 3–23 (LMWGLFSVIIASAAQLSLGFA) traverse the membrane as a helical segment. Residues 24–35 (ASHLPPMTHLWD) lie on the Periplasmic side of the membrane. A helical transmembrane segment spans residues 36–56 (FIAALLAFGLDARILLLGLLG). Residues 57-76 (YLLSVFCWYKTLHKLALSKA) lie on the Cytoplasmic side of the membrane. A helical membrane pass occupies residues 77–97 (YALLSMSYVLVWIASMILPGW). The Periplasmic segment spans residues 98–100 (EGT). Residues 101–121 (FSLKALLGVACIMSGLMLIFL) traverse the membrane as a helical segment. At 122–128 (PTTKQRY) the chain is on the cytoplasmic side.

This sequence belongs to the ArnF family. Heterodimer of ArnE and ArnF.

It localises to the cell inner membrane. The protein operates within bacterial outer membrane biogenesis; lipopolysaccharide biosynthesis. In terms of biological role, translocates 4-amino-4-deoxy-L-arabinose-phosphoundecaprenol (alpha-L-Ara4N-phosphoundecaprenol) from the cytoplasmic to the periplasmic side of the inner membrane. This is Probable 4-amino-4-deoxy-L-arabinose-phosphoundecaprenol flippase subunit ArnF from Escherichia coli O17:K52:H18 (strain UMN026 / ExPEC).